A 173-amino-acid polypeptide reads, in one-letter code: Large ribosomal subunit protein uL5 (173 aa).

The protein belongs to the universal ribosomal protein uL5 family. As to quaternary structure, component of the large ribosomal subunit.

The protein localises to the nucleus. Its subcellular location is the cytoplasm. In terms of biological role, component of the ribosome, a large ribonucleoprotein complex responsible for the synthesis of proteins in the cell. The small ribosomal subunit (SSU) binds messenger RNAs (mRNAs) and translates the encoded message by selecting cognate aminoacyl-transfer RNA (tRNA) molecules. The large subunit (LSU) contains the ribosomal catalytic site termed the peptidyl transferase center (PTC), which catalyzes the formation of peptide bonds, thereby polymerizing the amino acids delivered by tRNAs into a polypeptide chain. The nascent polypeptides leave the ribosome through a tunnel in the LSU and interact with protein factors that function in enzymatic processing, targeting, and the membrane insertion of nascent chains at the exit of the ribosomal tunnel. This chain is Large ribosomal subunit protein uL5 (RPL11), found in Encephalitozoon cuniculi (strain GB-M1) (Microsporidian parasite).